Reading from the N-terminus, the 69-residue chain is uncharacterized protein (69 aa).

In terms of domain architecture, CHCH spans 6–56 (SEECTPAKKKYDACFNDWYANKFLKGDLHNRDCDELFAEYKSCLLKALKTK). 2 short sequence motifs (cx9C motif) span residues 9-19 (CTPAKKKYDAC) and 38-48 (CDELFAEYKSC). Intrachain disulfides connect C9–C48 and C19–C38.

This sequence belongs to the TRIAP1/MDM35 family.

This is an uncharacterized protein from Schizosaccharomyces pombe (strain 972 / ATCC 24843) (Fission yeast).